The sequence spans 194 residues: MNRKDKYYIRAKRENYRSRASYKIIEINNKYNIVSRGDNVLEFGSSPGGWTQVIENITQSVIIAVDINRMDPVKNTVFIKMNIFDDDIFKSIDHAMAENNIKNFDSILSDAMSRTSGIEDRDHYNSYKICERVMDISIPRLKNGGNIILKQFQGDMTNEFIKKWSGYFNYYKITKPKASRQHSREIYIIFLNRI.

Residues Gly-48, Trp-50, Asp-66, Asn-82, and Asp-110 each coordinate S-adenosyl-L-methionine. Lys-150 acts as the Proton acceptor in catalysis.

Belongs to the class I-like SAM-binding methyltransferase superfamily. RNA methyltransferase RlmE family.

The protein resides in the cytoplasm. The enzyme catalyses uridine(2552) in 23S rRNA + S-adenosyl-L-methionine = 2'-O-methyluridine(2552) in 23S rRNA + S-adenosyl-L-homocysteine + H(+). Specifically methylates the uridine in position 2552 of 23S rRNA at the 2'-O position of the ribose in the fully assembled 50S ribosomal subunit. The protein is Ribosomal RNA large subunit methyltransferase E of Picrophilus torridus (strain ATCC 700027 / DSM 9790 / JCM 10055 / NBRC 100828 / KAW 2/3).